A 297-amino-acid polypeptide reads, in one-letter code: GATA transcription factor 24 (297 aa).

The Tify domain maps to 73–108 (GIENGDQLTLSFQGQVYVFDRVSPEKVQAVLLLLGG). Positions 143 to 185 (RLASLLRFREKRKGRNFDKTIRYTVRKEVALRMQRKKGQFTSA) constitute a CCT domain. The tract at residues 178–203 (KKGQFTSAKSSNDDSGSTGSDWGSNQ) is disordered. Residues 190–201 (DDSGSTGSDWGS) are compositionally biased toward low complexity. Residues 213–269 (QKPEVLCRHCGTSEKSTPMMRRGPDGPRTLCNACGLMWANKGTLRDLSKVPPPQTPQ) form a GATA-type zinc finger.

Belongs to the type IV zinc-finger family. Class C subfamily. Predominantly expressed in shoot apices, inflorescences and roots.

It localises to the nucleus. Transcriptional activator that specifically binds 5'-GATA-3' or 5'-GAT-3' motifs within gene promoters. The polypeptide is GATA transcription factor 24 (GATA24) (Arabidopsis thaliana (Mouse-ear cress)).